The following is a 308-amino-acid chain: Porphobilinogen deaminase (308 aa).

Cys-241 carries the S-(dipyrrolylmethanemethyl)cysteine modification.

Belongs to the HMBS family. In terms of assembly, monomer. Requires dipyrromethane as cofactor.

It carries out the reaction 4 porphobilinogen + H2O = hydroxymethylbilane + 4 NH4(+). The protein operates within porphyrin-containing compound metabolism; protoporphyrin-IX biosynthesis; coproporphyrinogen-III from 5-aminolevulinate: step 2/4. Functionally, tetrapolymerization of the monopyrrole PBG into the hydroxymethylbilane pre-uroporphyrinogen in several discrete steps. The sequence is that of Porphobilinogen deaminase from Staphylococcus aureus (strain Mu50 / ATCC 700699).